We begin with the raw amino-acid sequence, 384 residues long: 23S rRNA (uracil(747)-C(5))-methyltransferase RlmC (384 aa).

Residues cysteine 7, cysteine 15, cysteine 18, and cysteine 94 each contribute to the [4Fe-4S] cluster site. Residues glutamine 219, phenylalanine 248, glutamate 269, and asparagine 316 each contribute to the S-adenosyl-L-methionine site. The Nucleophile role is filled by cysteine 343.

This sequence belongs to the class I-like SAM-binding methyltransferase superfamily. RNA M5U methyltransferase family. RlmC subfamily.

It catalyses the reaction uridine(747) in 23S rRNA + S-adenosyl-L-methionine = 5-methyluridine(747) in 23S rRNA + S-adenosyl-L-homocysteine + H(+). Its function is as follows. Catalyzes the formation of 5-methyl-uridine at position 747 (m5U747) in 23S rRNA. The sequence is that of 23S rRNA (uracil(747)-C(5))-methyltransferase RlmC from Shewanella sp. (strain ANA-3).